A 393-amino-acid chain; its full sequence is NAD(P)H-quinone oxidoreductase subunit H, chloroplastic (393 aa).

This sequence belongs to the complex I 49 kDa subunit family. In terms of assembly, NDH is composed of at least 16 different subunits, 5 of which are encoded in the nucleus.

It localises to the plastid. The protein localises to the chloroplast thylakoid membrane. It carries out the reaction a plastoquinone + NADH + (n+1) H(+)(in) = a plastoquinol + NAD(+) + n H(+)(out). It catalyses the reaction a plastoquinone + NADPH + (n+1) H(+)(in) = a plastoquinol + NADP(+) + n H(+)(out). Its function is as follows. NDH shuttles electrons from NAD(P)H:plastoquinone, via FMN and iron-sulfur (Fe-S) centers, to quinones in the photosynthetic chain and possibly in a chloroplast respiratory chain. The immediate electron acceptor for the enzyme in this species is believed to be plastoquinone. Couples the redox reaction to proton translocation, and thus conserves the redox energy in a proton gradient. In Phaseolus vulgaris (Kidney bean), this protein is NAD(P)H-quinone oxidoreductase subunit H, chloroplastic.